A 127-amino-acid polypeptide reads, in one-letter code: Aspartate 1-decarboxylase (127 aa).

Ser25 acts as the Schiff-base intermediate with substrate; via pyruvic acid in catalysis. Ser25 is modified (pyruvic acid (Ser)). Thr57 contributes to the substrate binding site. Tyr58 (proton donor) is an active-site residue. 73–75 (GAA) contacts substrate.

This sequence belongs to the PanD family. Heterooctamer of four alpha and four beta subunits. The cofactor is pyruvate. Is synthesized initially as an inactive proenzyme, which is activated by self-cleavage at a specific serine bond to produce a beta-subunit with a hydroxyl group at its C-terminus and an alpha-subunit with a pyruvoyl group at its N-terminus.

It is found in the cytoplasm. It carries out the reaction L-aspartate + H(+) = beta-alanine + CO2. It participates in cofactor biosynthesis; (R)-pantothenate biosynthesis; beta-alanine from L-aspartate: step 1/1. Functionally, catalyzes the pyruvoyl-dependent decarboxylation of aspartate to produce beta-alanine. This chain is Aspartate 1-decarboxylase, found in Neisseria meningitidis serogroup A / serotype 4A (strain DSM 15465 / Z2491).